A 308-amino-acid polypeptide reads, in one-letter code: Aspartate carbamoyltransferase catalytic subunit (308 aa).

2 residues coordinate carbamoyl phosphate: R55 and T56. Residue K83 coordinates L-aspartate. Residues R105, H133, and Q136 each contribute to the carbamoyl phosphate site. L-aspartate-binding residues include R166 and R223. The carbamoyl phosphate site is built by G264 and P265.

It belongs to the aspartate/ornithine carbamoyltransferase superfamily. ATCase family. Heterododecamer (2C3:3R2) of six catalytic PyrB chains organized as two trimers (C3), and six regulatory PyrI chains organized as three dimers (R2).

The enzyme catalyses carbamoyl phosphate + L-aspartate = N-carbamoyl-L-aspartate + phosphate + H(+). It functions in the pathway pyrimidine metabolism; UMP biosynthesis via de novo pathway; (S)-dihydroorotate from bicarbonate: step 2/3. In terms of biological role, catalyzes the condensation of carbamoyl phosphate and aspartate to form carbamoyl aspartate and inorganic phosphate, the committed step in the de novo pyrimidine nucleotide biosynthesis pathway. The protein is Aspartate carbamoyltransferase catalytic subunit of Salinispora tropica (strain ATCC BAA-916 / DSM 44818 / JCM 13857 / NBRC 105044 / CNB-440).